The chain runs to 924 residues: TBC1 domain family member 2A (924 aa).

A disordered region spans residues 1–38 (MEDTPERTPSSESIQPPGLAREPEVTSPGDSEGCARPL). Residues 1 to 167 (MEDTPERTPS…TENGPTLHLK (167 aa)) form an interaction with CADH1 region. The PH domain maps to 42–140 (PKKLCGYLSK…WLQQLQMKRW (99 aa)). The segment at 228–296 (KQAQATAHGP…KRQSNTFPFF (69 aa)) is disordered. The span at 261–270 (IPEKEPEDPP) shows a compositional bias: basic and acidic residues. Residues 297–435 (SDGLARSRTA…KLTEDLAQPQ (139 aa)) are interaction with RAC1. 3 coiled-coil regions span residues 303-332 (SRTA…ELVI), 361-418 (LELV…AKQQ), and 444-477 (FLSQ…QVTK). The Rab-GAP TBC domain occupies 621-813 (GVPREHRPRV…RVWDAFLYEG (193 aa)). Residues 871–906 (MKQLRQLRAAHRERLEAELRELELLKAEYLERRASR) are a coiled coil. At S916 the chain carries Phosphoserine.

Interacts with activated RAC1 and CDH1.

It is found in the cytoplasm. The protein localises to the cytoplasmic vesicle. The protein resides in the cell junction. Functionally, acts as a GTPase-activating protein for RAB7A. Signal effector acting as a linker between RAC1 and RAB7A, leading to RAB7A inactivation and subsequent inhibition of cadherin degradation and reduced cell-cell adhesion. This chain is TBC1 domain family member 2A (Tbc1d2), found in Rattus norvegicus (Rat).